Consider the following 372-residue polypeptide: VTKAVENINAIIAPALKGMDPVKQAEIDQKMKDLDGTDNKGKLGANAILAVSMAVCKAGAAEKGVPLYKHIADLAGNSKLILPVPSFNIINGGSHAGNALAMQEFMILPVGASSFSEAMRMGCEVYHALKGLIKAKYGQDACNVGDEGGFAPNIGSNDEGLNLVNEAIEKAGYTGKVKIGMDVASSEFYTEDGMYDLDFKNQPNDGSQKKTKEQMLELYNEFCKKYPVISIEDPFEQDDWEPCAKLTTENICQVVGDDILVTNPVRVKKAIDAKAVNALLLKVNQIGTITESIEAVRMAKEAGWGVMTSHRSGETEDSFIADLAVGLASGQIKTGAPCRSERNAKYNQLLRIEEELGENAVYAGESWRHIGW.

2 residues coordinate substrate: His-95 and Glu-104. Glu-147 serves as the catalytic Proton donor. 3 residues coordinate Mg(2+): Asp-182, Glu-232, and Asp-257. Residues Glu-232 and Asp-257 each coordinate substrate. The active-site Proton acceptor is Lys-282. Residues 309–312 (SHRS) and Lys-333 contribute to the substrate site.

It belongs to the enolase family. Homodimer. The cofactor is Mg(2+).

The protein resides in the cytoplasm. It carries out the reaction (2R)-2-phosphoglycerate = phosphoenolpyruvate + H2O. It functions in the pathway carbohydrate degradation; glycolysis; pyruvate from D-glyceraldehyde 3-phosphate: step 4/5. This Chlamydomonas reinhardtii (Chlamydomonas smithii) protein is Enolase (ENO).